Reading from the N-terminus, the 246-residue chain is O-antigen export system ATP-binding protein RfbB (246 aa).

In terms of domain architecture, ABC transporter spans 22–246; the sequence is SGIKDLIFHP…IIELYKQAMA (225 aa). 63–70 contacts ATP; the sequence is GRNGAGKS.

Belongs to the ABC transporter superfamily.

It localises to the cell inner membrane. In terms of biological role, may form an ATP-driven O-antigen export apparatus, in association with RfbA. In Klebsiella pneumoniae, this protein is O-antigen export system ATP-binding protein RfbB (rfbB).